We begin with the raw amino-acid sequence, 511 residues long: Pickpocket protein 19 (511 aa).

The next 2 helical transmembrane spans lie at 59-79 and 471-491; these read LWLAIVLGAVITGFSLYTVLM and GIISLYIGASVMSFIELLFVL.

This sequence belongs to the amiloride-sensitive sodium channel (TC 1.A.6) family. In terms of tissue distribution, expressed in the tracheal system. Expressed in the taste-sensing terminal organ of the larval head. In adults, expressed in hairs on the tibia, femur and wing margin, but not in hairs on the tarsi of the leg.

Its subcellular location is the membrane. Functionally, part of a complex that plays a role in tracheal liquid clearance. In both larvae and adults, contributes to the behavioral response to salt. Probable role in sodium transport. The polypeptide is Pickpocket protein 19 (ppk19) (Drosophila melanogaster (Fruit fly)).